Consider the following 49-residue polypeptide: Turripeptide OL47 (49 aa).

Positions 28–49 are disordered; it reads RSDTEKKCTGGPDPCPPRQWPD. Pro residues predominate over residues 40-49; sequence DPCPPRQWPD.

Contains 4 disulfide bonds. In terms of tissue distribution, expressed by the venom duct.

The protein localises to the secreted. Acts as a neurotoxin by inhibiting an ion channel. This chain is Turripeptide OL47, found in Iotyrris olangoensis (Sea snail).